The chain runs to 598 residues: Ceramide transfer protein (598 aa).

Polar residues predominate over residues 1–11 (MSDNQSWNSSG). The tract at residues 1-24 (MSDNQSWNSSGSEEDPETESGPPV) is disordered. Positions 23 to 117 (PVERCGVLSK…WIDAIEQHKT (95 aa)) constitute a PH domain. A Phosphoserine modification is found at serine 126. Phosphoserine; by PKD is present on serine 132. Serine 135 is modified (phosphoserine). Positions 202–221 (DDEDDFPTTRSDGDFLHNTN) are disordered. Positions 268–301 (KREESWQKRHDKEMEKRRRLEEAYKNAMAELKKK) form a coiled coil. At serine 315 the chain carries Phosphoserine. The FFAT motif lies at 321–327 (EFFDAVE). The 230-residue stretch at 363–592 (GTHRFVQKVE…FTSYVQEKTA (230 aa)) folds into the START domain. An N-acylsphing-4-enine is bound by residues glutamate 446, glutamine 467, asparagine 504, and tyrosine 553.

As to quaternary structure, interacts with VAPA and VAPB. Interaction with VAPB is less efficient than with VAPA. Interacts (via FFAT motif) with the MOSPD2 (via MSP domain). Post-translationally, phosphorylation on Ser-132 decreases the affinity toward phosphatidylinositol 4-phosphate at Golgi membranes and reduces ceramide transfer activity. Inactivated by hyperphosphorylation of serine residues by CSNK1G2/CK1 that triggers dissociation from the Golgi complex, thus down-regulating ER-to-Golgi transport of ceramide and sphingomyelin synthesis.

Its subcellular location is the cytoplasm. The protein localises to the golgi apparatus. It localises to the endoplasmic reticulum. The catalysed reaction is N-hexadecanoylsphing-4-enine(in) = N-hexadecanoylsphing-4-enine(out). Its function is as follows. Shelters ceramides and diacylglycerol lipids inside its START domain and mediates the intracellular trafficking of ceramides and diacylglycerol lipids in a non-vesicular manner. This Cricetulus griseus (Chinese hamster) protein is Ceramide transfer protein (CERT1).